Reading from the N-terminus, the 683-residue chain is MEEERVDSSKRLFRGIVADLRGRALCYKEDWVAGLRSGFGILAPTTYIFFASALPVIAFGEQLSRDTEGALSTVETLASTALCGVIHSILGGQPLLILGVAEPTVLMYVYLYNFAIGRPELGKQLYLAWAAWVCVWTALLLFVMAILNTADIINRFTRVAGELFGMLISVLFIQQAIKGMVSEFGMPKDEDSKLEKYKFEWLYTNGLLGLIFTFGLLYTALKSRKARSWRYGTGWYRSFIADYGVPLMVVVWTALSFSTPSKLPSGVPRRLFSPLPWDSPSLSHWTVIKDMGKVSPGYIFAAFIPALMIAGLYFFDHSVASQLAQQKEFNLKKPSAYHYDILLLGFMTLICGLLGLPPSNGVLPQSPMHTKSLAVLKRQLIRRKMVKTAKESIRKRETSSQVYENMQEVFIEMDKSPLAQTDPSVIIELQDLKEAVMKSNDEEREGDEESGFDPEKHLDAYLPVRVNEQRVSNLLQSLLVAGAVLAMPAIKLIPTSILWGYFAYMAIDSLPGNQFFERLTLLFVPTSRRFKVLEGAHASFVEKVPYKSMAAFTLLQIFYFGLCYGVTWIPVAGIMFPVPFFLLIAIRQYILPKLFNPAHLRELDAAEYEEIPGTPRNPLELSFRSNDSKRGVQEGDAEILDELTTSRGELKVRTLNLNEDKGNQIYPKEKVKAGDGDMSTTRE.

Topologically, residues 1–38 (MEEERVDSSKRLFRGIVADLRGRALCYKEDWVAGLRSG) are cytoplasmic. A helical membrane pass occupies residues 39-59 (FGILAPTTYIFFASALPVIAF). Topologically, residues 60–80 (GEQLSRDTEGALSTVETLAST) are extracellular. A helical transmembrane segment spans residues 81 to 101 (ALCGVIHSILGGQPLLILGVA). At 102 to 126 (EPTVLMYVYLYNFAIGRPELGKQLY) the chain is on the cytoplasmic side. Residues 127-147 (LAWAAWVCVWTALLLFVMAIL) form a helical membrane-spanning segment. The Extracellular segment spans residues 148–160 (NTADIINRFTRVA). The chain crosses the membrane as a helical span at residues 161–181 (GELFGMLISVLFIQQAIKGMV). The Cytoplasmic portion of the chain corresponds to 182-200 (SEFGMPKDEDSKLEKYKFE). Residues 201–221 (WLYTNGLLGLIFTFGLLYTAL) traverse the membrane as a helical segment. The Extracellular portion of the chain corresponds to 222–238 (KSRKARSWRYGTGWYRS). Residues 239 to 259 (FIADYGVPLMVVVWTALSFST) form a helical membrane-spanning segment. The Cytoplasmic segment spans residues 260–294 (PSKLPSGVPRRLFSPLPWDSPSLSHWTVIKDMGKV). Residues 295 to 315 (SPGYIFAAFIPALMIAGLYFF) form a helical membrane-spanning segment. Residues 316 to 335 (DHSVASQLAQQKEFNLKKPS) are Extracellular-facing. Residues 336–356 (AYHYDILLLGFMTLICGLLGL) traverse the membrane as a helical segment. Topologically, residues 357 to 477 (PPSNGVLPQS…EQRVSNLLQS (121 aa)) are cytoplasmic. Residues 478 to 498 (LLVAGAVLAMPAIKLIPTSIL) traverse the membrane as a helical segment. Residues 499-565 (WGYFAYMAID…QIFYFGLCYG (67 aa)) are Extracellular-facing. Residues 566-586 (VTWIPVAGIMFPVPFFLLIAI) form a helical membrane-spanning segment. Residues 587–683 (RQYILPKLFN…GDGDMSTTRE (97 aa)) are Cytoplasmic-facing. 2 disordered regions span residues 617–638 (NPLE…GDAE) and 661–683 (KGNQ…TTRE).

This sequence belongs to the anion exchanger (TC 2.A.31.3) family. Expressed in the distal sides of epidermal cells in the elongation zone of roots.

It is found in the membrane. Functionally, efflux-type boron transporter polarly localized in roots. Boron is essential for maintaining the integrity of plants cell walls. The chain is Boron transporter 4 (BOR4) from Arabidopsis thaliana (Mouse-ear cress).